A 267-amino-acid chain; its full sequence is Acyl-[acyl-carrier-protein]--UDP-N-acetylglucosamine O-acyltransferase (267 aa).

It belongs to the transferase hexapeptide repeat family. LpxA subfamily. As to quaternary structure, homotrimer.

It localises to the cytoplasm. The catalysed reaction is a (3R)-hydroxyacyl-[ACP] + UDP-N-acetyl-alpha-D-glucosamine = a UDP-3-O-[(3R)-3-hydroxyacyl]-N-acetyl-alpha-D-glucosamine + holo-[ACP]. It functions in the pathway glycolipid biosynthesis; lipid IV(A) biosynthesis; lipid IV(A) from (3R)-3-hydroxytetradecanoyl-[acyl-carrier-protein] and UDP-N-acetyl-alpha-D-glucosamine: step 1/6. Its function is as follows. Involved in the biosynthesis of lipid A, a phosphorylated glycolipid that anchors the lipopolysaccharide to the outer membrane of the cell. This is Acyl-[acyl-carrier-protein]--UDP-N-acetylglucosamine O-acyltransferase from Cupriavidus metallidurans (strain ATCC 43123 / DSM 2839 / NBRC 102507 / CH34) (Ralstonia metallidurans).